The sequence spans 313 residues: Cytochrome c biogenesis protein CcsA (313 aa).

8 consecutive transmembrane segments (helical) span residues 9 to 29, 44 to 64, 71 to 91, 111 to 131, 143 to 163, 217 to 237, 244 to 264, and 278 to 298; these read ILTHISFSIVSIVITIHLITF, GIIVTFFCITGLLVTRWISSG, LYESLIFLSWSFSLIHIIPYF, GFATSGILTEIHQSGILVPAL, MILGYAALLCGSLLSVALLVI, VISLGFTFLTIGILSGAVWAN, WNWDPKETWAFITWIVFAIYL, and AIVASIGFLIIWICYFGVNLL.

Belongs to the CcmF/CycK/Ccl1/NrfE/CcsA family. In terms of assembly, may interact with Ccs1.

The protein localises to the plastid. It is found in the chloroplast thylakoid membrane. In terms of biological role, required during biogenesis of c-type cytochromes (cytochrome c6 and cytochrome f) at the step of heme attachment. The sequence is that of Cytochrome c biogenesis protein CcsA from Solanum bulbocastanum (Wild potato).